Consider the following 245-residue polypeptide: tRNA (guanine-N(1)-)-methyltransferase (245 aa).

S-adenosyl-L-methionine is bound by residues G111 and 131–136 (MGDYVL).

The protein belongs to the RNA methyltransferase TrmD family. In terms of assembly, homodimer.

It localises to the cytoplasm. The enzyme catalyses guanosine(37) in tRNA + S-adenosyl-L-methionine = N(1)-methylguanosine(37) in tRNA + S-adenosyl-L-homocysteine + H(+). Functionally, specifically methylates guanosine-37 in various tRNAs. This Staphylococcus epidermidis (strain ATCC 35984 / DSM 28319 / BCRC 17069 / CCUG 31568 / BM 3577 / RP62A) protein is tRNA (guanine-N(1)-)-methyltransferase.